Consider the following 459-residue polypeptide: N,N-dimethyl phenylurea N-demethylase subunit alpha (459 aa).

In terms of domain architecture, Rieske spans 55–166 (WVFVAHETEI…VESYHGFIFT (112 aa)). Residues Cys97, His99, Cys117, and His120 each coordinate [2Fe-2S] cluster. The Fe cation site is built by His225, His230, and Asp386.

Belongs to the bacterial ring-hydroxylating dioxygenase alpha subunit family. As to quaternary structure, pdmA (subunit alpha) and PdmB (subunit beta) form the oxygenase component of a bacterial Rieske non-heme iron oxygenase (RO) system. The cofactor is [2Fe-2S] cluster. Requires Fe cation as cofactor.

It catalyses the reaction a 1,1-dimethyl-3-phenylurea + 2 reduced [2Fe-2S]-[ferredoxin] + O2 + 2 H(+) = a 1-methyl-3-phenylurea + formaldehyde + 2 oxidized [2Fe-2S]-[ferredoxin] + H2O. The catalysed reaction is isoproturon + 2 reduced [2Fe-2S]-[ferredoxin] + O2 + 2 H(+) = 1-methyl-3-[4-(propan-2-yl)phenyl]urea + formaldehyde + 2 oxidized [2Fe-2S]-[ferredoxin] + H2O. The enzyme catalyses chlorotoluron + 2 reduced [2Fe-2S]-[ferredoxin] + O2 + 2 H(+) = 3-(3-chloro-4-methylphenyl)-1-methylurea + formaldehyde + 2 oxidized [2Fe-2S]-[ferredoxin] + H2O. It carries out the reaction metoxuron + 2 reduced [2Fe-2S]-[ferredoxin] + O2 + 2 H(+) = 3-(3-chloro-4-methoxylphenyl)-1-methylurea + formaldehyde + 2 oxidized [2Fe-2S]-[ferredoxin] + H2O. It catalyses the reaction monuron + 2 reduced [2Fe-2S]-[ferredoxin] + O2 + 2 H(+) = 3-(4-chlorophenyl)-1-methylurea + formaldehyde + 2 oxidized [2Fe-2S]-[ferredoxin] + H2O. The catalysed reaction is diuron + 2 reduced [2Fe-2S]-[ferredoxin] + O2 + 2 H(+) = 3-(3,4-dichlorophenyl)-1-methylurea + formaldehyde + 2 oxidized [2Fe-2S]-[ferredoxin] + H2O. The enzyme catalyses fluometuron + 2 reduced [2Fe-2S]-[ferredoxin] + O2 + 2 H(+) = 3-[3-(trifluoromethyl)phenyl]-1-methylurea + formaldehyde + 2 oxidized [2Fe-2S]-[ferredoxin] + H2O. It carries out the reaction fenuron + 2 reduced [2Fe-2S]-[ferredoxin] + O2 + 2 H(+) = 1-methyl-3-phenylurea + formaldehyde + 2 oxidized [2Fe-2S]-[ferredoxin] + H2O. It participates in xenobiotic degradation. Its activity is regulated as follows. Activity is stimulated in vitro by coexpression of a [3Fe-4S]-type ferredoxin. Functionally, part of the multicomponent N,N-dimethyl phenylurea N-demethylase responsible for the initial N-demethylation step during the bacterial metabolism of N,N-dimethyl-substituted phenylurea herbicides. Catalyzes the mono-N-demethylation of N,N-dimethyl-substituted phenylurea herbicides to their mono-N-demethylated derivatives. Is active on isoproturon (IPU), chlorotoluron, metoxuron, monoron, diuron, fluometuron and fenuron, but cannot transform the N-methoxy-N-methyl-substituted herbicides. The protein is N,N-dimethyl phenylurea N-demethylase subunit alpha of Sphingobium sp. (strain YBL2).